The chain runs to 129 residues: Ig lambda-1 chain V regions MOPC 104E/RPC20/J558/S104 (129 aa).

An N-terminal signal peptide occupies residues Met1 to Ser19. Gln20 carries the post-translational modification Pyrrolidone carboxylic acid. The Ig-like domain occupies Gln20–Leu125.

In Mus musculus (Mouse), this protein is Ig lambda-1 chain V regions MOPC 104E/RPC20/J558/S104.